The following is a 100-amino-acid chain: Large ribosomal subunit protein bL27 (100 aa).

Residues 1-9 (MLSINLSLC) constitute a propeptide that is removed on maturation.

It belongs to the bacterial ribosomal protein bL27 family. In terms of processing, the N-terminus is cleaved by ribosomal processing cysteine protease Prp.

The protein is Large ribosomal subunit protein bL27 of Clostridium acetobutylicum (strain ATCC 824 / DSM 792 / JCM 1419 / IAM 19013 / LMG 5710 / NBRC 13948 / NRRL B-527 / VKM B-1787 / 2291 / W).